Here is a 484-residue protein sequence, read N- to C-terminus: Glycogen synthase (484 aa).

Residue Lys-21 participates in ADP-alpha-D-glucose binding.

This sequence belongs to the glycosyltransferase 1 family. Bacterial/plant glycogen synthase subfamily.

It carries out the reaction [(1-&gt;4)-alpha-D-glucosyl](n) + ADP-alpha-D-glucose = [(1-&gt;4)-alpha-D-glucosyl](n+1) + ADP + H(+). Its pathway is glycan biosynthesis; glycogen biosynthesis. Its function is as follows. Synthesizes alpha-1,4-glucan chains using ADP-glucose. This is Glycogen synthase from Pseudomonas syringae pv. tomato (strain ATCC BAA-871 / DC3000).